Here is a 725-residue protein sequence, read N- to C-terminus: N-alpha-acetyltransferase 35, NatC auxiliary subunit (725 aa).

A Phosphoserine modification is found at S187. The interval 548–573 (ERIMEEQQKGRSSKKTKKKKKVRPLS) is disordered. Positions 558-571 (RSSKKTKKKKKVRP) are enriched in basic residues.

This sequence belongs to the MAK10 family. As to quaternary structure, component of the N-terminal acetyltransferase C (NatC) complex, which is composed of NAA35, NAA38 and NAA30.

It is found in the cytoplasm. In terms of biological role, auxillary component of the N-terminal acetyltransferase C (NatC) complex which catalyzes acetylation of N-terminal methionine residues. N-terminal acetylation protects proteins from ubiquitination and degradation by the N-end rule pathway. Involved in regulation of apoptosis and proliferation of smooth muscle cells. The chain is N-alpha-acetyltransferase 35, NatC auxiliary subunit (NAA35) from Homo sapiens (Human).